We begin with the raw amino-acid sequence, 397 residues long: RNA pseudouridine synthase 5 (397 aa).

The region spanning 64-114 is the S4 RNA-binding domain; it reads APLPGWIKRIRDGQITVDGEVATDPDMILREGSKLVYHRLPWQEPFAPHLL.

This sequence belongs to the pseudouridine synthase RluA family.

It catalyses the reaction a uridine in RNA = a pseudouridine in RNA. The protein is RNA pseudouridine synthase 5 of Oryza sativa subsp. japonica (Rice).